The chain runs to 394 residues: NAD(P)H-quinone oxidoreductase subunit H (394 aa).

Belongs to the complex I 49 kDa subunit family. As to quaternary structure, NDH-1 can be composed of about 15 different subunits; different subcomplexes with different compositions have been identified which probably have different functions.

It is found in the cellular thylakoid membrane. It carries out the reaction a plastoquinone + NADH + (n+1) H(+)(in) = a plastoquinol + NAD(+) + n H(+)(out). The catalysed reaction is a plastoquinone + NADPH + (n+1) H(+)(in) = a plastoquinol + NADP(+) + n H(+)(out). Functionally, NDH-1 shuttles electrons from an unknown electron donor, via FMN and iron-sulfur (Fe-S) centers, to quinones in the respiratory and/or the photosynthetic chain. The immediate electron acceptor for the enzyme in this species is believed to be plastoquinone. Couples the redox reaction to proton translocation, and thus conserves the redox energy in a proton gradient. Cyanobacterial NDH-1 also plays a role in inorganic carbon-concentration. This is NAD(P)H-quinone oxidoreductase subunit H from Picosynechococcus sp. (strain ATCC 27264 / PCC 7002 / PR-6) (Agmenellum quadruplicatum).